The chain runs to 400 residues: uncharacterized protein (400 aa).

An N-terminal signal peptide occupies residues 1–31 (MENPIKPVATRSIGIAVVLLVVGIVIGFAVG).

It belongs to the bacterial solute-binding protein 1 family. WtpA subfamily.

This is an uncharacterized protein from Thermoplasma acidophilum (strain ATCC 25905 / DSM 1728 / JCM 9062 / NBRC 15155 / AMRC-C165).